A 458-amino-acid polypeptide reads, in one-letter code: Serine/threonine-protein kinase tricornered (458 aa).

The 298-residue stretch at 92–389 folds into the Protein kinase domain; the sequence is FEALKVIGRG…LEDLKSVPFF (298 aa). ATP-binding positions include 98–106 and K121; that span reads IGRGAFGEV. Residues 118–179 form an interaction with mats and Mob1 region; it reads YAMKVLRKAD…EFLPGGDMMT (62 aa). The active-site Proton acceptor is the D215. A Phosphoserine modification is found at S287. The AGC-kinase C-terminal domain maps to 390-458; it reads RGVDWEHIRE…YKRFEVRNLE (69 aa). A Phosphothreonine modification is found at T448.

It belongs to the protein kinase superfamily. AGC Ser/Thr protein kinase family. In terms of assembly, interacts with, and is activated by, Mob1. The cofactor is Mg(2+).

It localises to the cytoplasm. The protein resides in the nucleus. It carries out the reaction L-seryl-[protein] + ATP = O-phospho-L-seryl-[protein] + ADP + H(+). The catalysed reaction is L-threonyl-[protein] + ATP = O-phospho-L-threonyl-[protein] + ADP + H(+). Serine/threonine-protein kinase involved in controlling cell structure and proliferation of a variety of polarized outgrowths including epidermal hairs, bristles, arista laterals, and dendrites. Together with fry, maintains the integrity of epidermal hairs and is an essential component of the signaling pathway regulating dendritic branching of sensory neurons. Reduces neurite outgrowth by phosphorylating pav/pavarotti, thereby inhibiting its function in microtubule-microtubule sliding. The chain is Serine/threonine-protein kinase tricornered from Drosophila pseudoobscura pseudoobscura (Fruit fly).